The following is a 347-amino-acid chain: NADH-ubiquinone oxidoreductase chain 2 (347 aa).

Helical transmembrane passes span 3–23, 25–45, 59–79, 96–116, 122–142, 149–169, 178–198, 200–220, 242–262, 274–294, and 323–343; these read PPIL…VLMS, HWLM…PILM, YFLT…INLM, TMMT…FWVP, VHMS…LLVL, IDPN…GWGG, ILAY…LYNP, MMLL…MLFM, SLIL…GFIP, EMII…YFYM, and MILL…TPLL.

Belongs to the complex I subunit 2 family. In terms of assembly, core subunit of respiratory chain NADH dehydrogenase (Complex I) which is composed of 45 different subunits. Interacts with TMEM242.

The protein localises to the mitochondrion inner membrane. The enzyme catalyses a ubiquinone + NADH + 5 H(+)(in) = a ubiquinol + NAD(+) + 4 H(+)(out). Its function is as follows. Core subunit of the mitochondrial membrane respiratory chain NADH dehydrogenase (Complex I) that is believed to belong to the minimal assembly required for catalysis. Complex I functions in the transfer of electrons from NADH to the respiratory chain. The immediate electron acceptor for the enzyme is believed to be ubiquinone. The sequence is that of NADH-ubiquinone oxidoreductase chain 2 from Suricata suricatta (Meerkat).